Consider the following 558-residue polypeptide: MGFKSDIEIAQEAKPQDIREVAKKLGLGEDDVELYGKYKAKVDYNLLKRETGKKAKLILTTAINPTPAGEGKTTTTIGVADAFAKLDKNVLVALREPSLGPVFGVKGGAAGGGYAQVVPMEDINLHFTGDFHAIGAANNLLAAMLDNHIHQGNALRIDPKKITWRRCVDMNDRQLRNIVDGMGKKGDGAVRQDGFDITVASEIMAAFCLASDISDLKERLGNIIVGYSYEGEPVTARQLKANGAMAALLKDALKPNLVQTLEGTPSFVHGGPFANIAHGCNSVIATRMAMHFADYVITEAGFGADLGAEKFLDIKCRMANLKPDAVIIVATVRALKYNGGVAKADLNNENLEALEKGLPNLLKHVENITQVYGLPAVVAINRFPLDTEAELKLVEDKCKELGVNVALSEVWAKGGEGGIAVAKEVLRLLDEEENNFRFCYEDDLSIKDKINAIATKIYGADGVDYTPEADKEIANLEKLGFTKVPVCMAKTQYSLTDDQTKLGRPTGFRITVRQATISAGAGFIVALTGEIMKMPGLPKVPAAEKIDVDENGVIAGLF.

ATP is bound at residue 66–73; it reads TPAGEGKT.

It belongs to the formate--tetrahydrofolate ligase family.

The catalysed reaction is (6S)-5,6,7,8-tetrahydrofolate + formate + ATP = (6R)-10-formyltetrahydrofolate + ADP + phosphate. The protein operates within one-carbon metabolism; tetrahydrofolate interconversion. The protein is Formate--tetrahydrofolate ligase of Clostridioides difficile (strain 630) (Peptoclostridium difficile).